The chain runs to 643 residues: Phosphatidylinositol-3,5-bisphosphate 3-phosphatase MTMR2 (643 aa).

2 stretches are compositionally biased toward polar residues: residues methionine 1–serine 12 and aspartate 23–lysine 40. The tract at residues methionine 1–asparagine 56 is disordered. Residues serine 6 and serine 9 each carry the phosphoserine modification. The segment covering serine 41 to aspartate 55 has biased composition (low complexity). Position 58 is a phosphoserine (serine 58). One can recognise a GRAM domain in the interval asparagine 68 to glycine 139. The Myotubularin phosphatase domain maps to glycine 205–tyrosine 580. Asparagine 330, asparagine 355, and isoleucine 356 together coordinate a 1,2-diacyl-sn-glycero-3-phospho-(1D-myo-inositol-3,5-bisphosphate). Positions 330, 355, and 356 each coordinate a 1,2-diacyl-sn-glycero-3-phospho-(1D-myo-inositol-3-phosphate). The active-site Phosphocysteine intermediate is cysteine 417. Serine 418, aspartate 419, glycine 420, tryptophan 421, aspartate 422, arginine 423, arginine 459, and arginine 463 together coordinate a 1,2-diacyl-sn-glycero-3-phospho-(1D-myo-inositol-3,5-bisphosphate). A 1,2-diacyl-sn-glycero-3-phospho-(1D-myo-inositol-3-phosphate) contacts are provided by serine 418, aspartate 419, glycine 420, tryptophan 421, aspartate 422, and arginine 423. Arginine 463 is a binding site for a 1,2-diacyl-sn-glycero-3-phospho-(1D-myo-inositol-3-phosphate). The stretch at isoleucine 593–glutamate 627 forms a coiled coil. A disordered region spans residues glutamine 615 to valine 643. The segment covering asparagine 620–serine 631 has biased composition (low complexity). Residues proline 632 to valine 643 show a composition bias toward polar residues.

It belongs to the protein-tyrosine phosphatase family. Non-receptor class myotubularin subfamily. As to quaternary structure, homodimer (via coiled-coil domain). Heterotetramer consisting of one MTMR2 dimer and one SBF2/MTMR13 dimer; specifically in peripheral nerves stabilizes SBF2/MTMR13 at the membranes and increases MTMR2 catalytic activity towards phosphatidylinositol 3,5-bisphosphate and to a lesser extent towards phosphatidylinositol 3-phosphate. Heterodimer with SBF1/MTMR5; acts as an adapter for the phosphatase MTMR2 to regulate MTMR2 catalytic activity and subcellular location. Heterodimer with MTMR12. In terms of processing, phosphorylation at Ser-58 decreases MTMR2 localization to endocytic vesicular structures.

The protein resides in the cytoplasm. It is found in the early endosome membrane. The protein localises to the perinuclear region. It localises to the cell projection. Its subcellular location is the axon. The protein resides in the endosome membrane. It carries out the reaction a 1,2-diacyl-sn-glycero-3-phospho-(1D-myo-inositol-3,5-bisphosphate) + H2O = a 1,2-diacyl-sn-glycero-3-phospho-(1D-myo-inositol-5-phosphate) + phosphate. It catalyses the reaction a 1,2-diacyl-sn-glycero-3-phospho-(1D-myo-inositol-3-phosphate) + H2O = a 1,2-diacyl-sn-glycero-3-phospho-(1D-myo-inositol) + phosphate. The catalysed reaction is 1,2-dioctanoyl-sn-glycero-3-phospho-(1-D-myo-inositol-3-phosphate) + H2O = 1,2-dioctanoyl-sn-glycero-3-phospho-(1D-myo-inositol) + phosphate. The enzyme catalyses 1,2-dioctanoyl-sn-glycero-3-phospho-(1D-myo-inositol-3,5-bisphosphate) + H2O = 1,2-dioctanoyl-sn-glycero-3-phospho-(1D-myo-inositol-5-phosphate) + phosphate. Its function is as follows. Lipid phosphatase that specifically dephosphorylates the D-3 position of phosphatidylinositol 3-phosphate and phosphatidylinositol 3,5-bisphosphate, generating phosphatidylinositol and phosphatidylinositol 5-phosphate. Regulates the level of these phosphoinositides critical for various biological processes including autophagy initiation and autophagosome maturation. This chain is Phosphatidylinositol-3,5-bisphosphate 3-phosphatase MTMR2, found in Homo sapiens (Human).